Consider the following 466-residue polypeptide: 23S rRNA (uracil(1939)-C(5))-methyltransferase RlmD (466 aa).

Positions 1 to 54 (MVDVLNIESLDLEARGIAHRDGKVLFVEGALPGERVTVQTVRRKPSYEIAKVEE) constitute a TRAM domain. Positions 67, 73, 76, and 155 each coordinate [4Fe-4S] cluster. The S-adenosyl-L-methionine site is built by Gln264, Phe293, Asn298, Glu314, Asn342, and Asp363. Cys393 acts as the Nucleophile in catalysis.

This sequence belongs to the class I-like SAM-binding methyltransferase superfamily. RNA M5U methyltransferase family. RlmD subfamily.

The enzyme catalyses uridine(1939) in 23S rRNA + S-adenosyl-L-methionine = 5-methyluridine(1939) in 23S rRNA + S-adenosyl-L-homocysteine + H(+). In terms of biological role, catalyzes the formation of 5-methyl-uridine at position 1939 (m5U1939) in 23S rRNA. The sequence is that of 23S rRNA (uracil(1939)-C(5))-methyltransferase RlmD from Bordetella parapertussis (strain 12822 / ATCC BAA-587 / NCTC 13253).